Consider the following 163-residue polypeptide: UPF0262 protein RPB_4349 (163 aa).

This sequence belongs to the UPF0262 family.

The polypeptide is UPF0262 protein RPB_4349 (Rhodopseudomonas palustris (strain HaA2)).